The chain runs to 158 residues: Rhombotin-2 (158 aa).

2 consecutive LIM zinc-binding domains span residues 28 to 90 (LTCG…LFGQ) and 92 to 154 (GLCA…WTKL).

Expression becomes restricted to the ventral blood island (VBI) as the embryo develops. In late neurula and early tailbud embryos, also expressed in the dorsal lateral plate (DLP), the site of definitive hematopoiesis in the tadpole. Expression in the DLP diminishes during tailbud stages. Expressed in circulating blood cells of tadpoles. Also expressed in non-hematopoietic sites, including the tailbud region and the central nervous system of early neurula embryos.

The protein localises to the nucleus. In terms of biological role, transcription factor that acts synergistically with tal1/scl and gata1 to specify embryonic dorsal mesoderm to a hematopoietic fate. Induces globin gene expression together with fgf. This Xenopus laevis (African clawed frog) protein is Rhombotin-2.